A 349-amino-acid chain; its full sequence is D-alanine--D-alanine ligase (349 aa).

The ATP-grasp domain maps to 132–335; the sequence is KHVFEAVGVP…YSDLIEKLVD (204 aa). 162–217 contacts ATP; sequence VEKLEFPVFVKPANMGSSVGISKVDDLADLQPALSEAYKYDNRVVIEQGVDAREIE. Residues aspartate 289, glutamate 302, and asparagine 304 each contribute to the Mg(2+) site.

This sequence belongs to the D-alanine--D-alanine ligase family. The cofactor is Mg(2+). Mn(2+) serves as cofactor.

The protein resides in the cytoplasm. The catalysed reaction is 2 D-alanine + ATP = D-alanyl-D-alanine + ADP + phosphate + H(+). The protein operates within cell wall biogenesis; peptidoglycan biosynthesis. Cell wall formation. The polypeptide is D-alanine--D-alanine ligase (Lactococcus lactis subsp. lactis (strain IL1403) (Streptococcus lactis)).